A 464-amino-acid chain; its full sequence is tRNA modification GTPase MnmE (464 aa).

Residues R27, E90, and K129 each coordinate (6S)-5-formyl-5,6,7,8-tetrahydrofolate. Residues 222-384 enclose the TrmE-type G domain; it reads GVALVLAGSV…LYDKIRALIS (163 aa). Residues 232–237, 251–257, and 276–279 each bind GTP; these read NAGKSS, SSYPGTT, and DTAG. Mg(2+)-binding residues include S236 and T257. Position 464 (K464) interacts with (6S)-5-formyl-5,6,7,8-tetrahydrofolate.

Belongs to the TRAFAC class TrmE-Era-EngA-EngB-Septin-like GTPase superfamily. TrmE GTPase family. In terms of assembly, homodimer. Heterotetramer of two MnmE and two MnmG subunits. Requires K(+) as cofactor.

The protein resides in the cytoplasm. Exhibits a very high intrinsic GTPase hydrolysis rate. Involved in the addition of a carboxymethylaminomethyl (cmnm) group at the wobble position (U34) of certain tRNAs, forming tRNA-cmnm(5)s(2)U34. The sequence is that of tRNA modification GTPase MnmE from Borreliella burgdorferi (strain ATCC 35210 / DSM 4680 / CIP 102532 / B31) (Borrelia burgdorferi).